We begin with the raw amino-acid sequence, 381 residues long: MSLNMFWFLPTHGDGHYLGTEEGSRPVDHGYLQQIAQAADRLGYTGVLIPTGRSCEDAWLVAASMIPVTQRLKFLVALRPSVTSPTVAARQAATLDRLSNGRALFNLVTGSDPQELAGDGVFLDHSERYEASAEFTQVWRRLLQRETVDFNGKHIHVRGAKLLFPAIQQPYPPLYFGGSSDVAQELAAEQVDLYLTWGEPPELVKEKIEQVRAKAAAHGRKIRFGIRLHVIVRETNDEAWQAAERLISHLDDETIAKAQAAFARTDSVGQQRMAALHNGKRDNLEISPNLWAGVGLVRGGAGTALVGDGPTVAARINEYAALGIDSFVLSGYPHLEEAYRVGELLFPLLDVAIPEIPQPQPLNPQGEAVANDFIPRKVAQS.

Belongs to the SsuD family. As to quaternary structure, homotetramer.

It carries out the reaction an alkanesulfonate + FMNH2 + O2 = an aldehyde + FMN + sulfite + H2O + 2 H(+). Catalyzes the desulfonation of aliphatic sulfonates. This is Alkanesulfonate monooxygenase from Escherichia coli O9:H4 (strain HS).